A 208-amino-acid chain; its full sequence is Uracil phosphoribosyltransferase (208 aa).

Residues arginine 78, arginine 103, and aspartate 130–threonine 138 contribute to the 5-phospho-alpha-D-ribose 1-diphosphate site. Residues isoleucine 193 and glycine 198 to alanine 200 each bind uracil. Aspartate 199 contacts 5-phospho-alpha-D-ribose 1-diphosphate.

The protein belongs to the UPRTase family. Requires Mg(2+) as cofactor.

The catalysed reaction is UMP + diphosphate = 5-phospho-alpha-D-ribose 1-diphosphate + uracil. The protein operates within pyrimidine metabolism; UMP biosynthesis via salvage pathway; UMP from uracil: step 1/1. Allosterically activated by GTP. Its function is as follows. Catalyzes the conversion of uracil and 5-phospho-alpha-D-ribose 1-diphosphate (PRPP) to UMP and diphosphate. The protein is Uracil phosphoribosyltransferase of Oleidesulfovibrio alaskensis (strain ATCC BAA-1058 / DSM 17464 / G20) (Desulfovibrio alaskensis).